A 140-amino-acid chain; its full sequence is Relaxin-3 (140 aa).

The first 23 residues, 1–23, serve as a signal peptide directing secretion; that stretch reads MATRGLLLASWALLGALVLQAEA. 3 disulfides stabilise this stretch: Cys33–Cys127, Cys45–Cys140, and Cys126–Cys131. Residues 53–116 constitute a propeptide, connecting peptide; the sequence is ADILAHDPLG…GSPGVVRGSR (64 aa).

The protein belongs to the insulin family. Heterodimer of a B chain and an A chain linked by two disulfide bonds. Highly abundant expression is detected in neurons within the ventomedial dorsal tegmental nucleus and the laterally central gray alpha of the pons. Also detected at much lower levels within the hippocampus.

It localises to the secreted. Functionally, may play a role in neuropeptide signaling processes. Ligand for LGR7, relaxin-3 receptor-1 and relaxin-3 receptor-2. The protein is Relaxin-3 (Rln3) of Rattus norvegicus (Rat).